The primary structure comprises 356 residues: HTH-type transcriptional regulator AglR (356 aa).

An HTH lacI-type domain is found at 1 to 57; sequence MPVNLKQLAELLGLSQTTVSRALNGYPEVNAETRARVLEAVRETGYRPNRAAQRLAT. The H-T-H motif DNA-binding region spans 5–24; the sequence is LKQLAELLGLSQTTVSRALN. Positions 337–356 are disordered; that stretch reads TGPAPDRSPLPNPSPQVGGA.

In terms of biological role, probable regulatory protein for the binding-protein-dependent transport system for alpha-glucosides such as sucrose, maltose and trehalose. This chain is HTH-type transcriptional regulator AglR (aglR), found in Rhizobium meliloti (strain 1021) (Ensifer meliloti).